Reading from the N-terminus, the 122-residue chain is MIQQESRLKVADNSGAREVLTIKVLGGSGRKTANIGDVIVCTVKNATPGGVVKKGEVVKAVIVRTKSGVRRNDGSYIKFDENACVIIRDDKGPRGTRIFGPVARELREGNFMKIVSLAPEVL.

This sequence belongs to the universal ribosomal protein uL14 family. As to quaternary structure, part of the 50S ribosomal subunit. Forms a cluster with proteins L3 and L19. In the 70S ribosome, L14 and L19 interact and together make contacts with the 16S rRNA in bridges B5 and B8.

Binds to 23S rRNA. Forms part of two intersubunit bridges in the 70S ribosome. This chain is Large ribosomal subunit protein uL14, found in Macrococcus caseolyticus (strain JCSC5402) (Macrococcoides caseolyticum).